The chain runs to 256 residues: Type III pantothenate kinase (256 aa).

An ATP-binding site is contributed by 6–13 (DVGNTNIV). 107 to 110 (GADR) is a binding site for substrate. D109 acts as the Proton acceptor in catalysis. D129 contacts K(+). Position 132 (T132) interacts with ATP. Residue T184 coordinates substrate.

This sequence belongs to the type III pantothenate kinase family. In terms of assembly, homodimer. NH4(+) is required as a cofactor. It depends on K(+) as a cofactor.

The protein localises to the cytoplasm. It carries out the reaction (R)-pantothenate + ATP = (R)-4'-phosphopantothenate + ADP + H(+). It participates in cofactor biosynthesis; coenzyme A biosynthesis; CoA from (R)-pantothenate: step 1/5. Its function is as follows. Catalyzes the phosphorylation of pantothenate (Pan), the first step in CoA biosynthesis. This chain is Type III pantothenate kinase, found in Pelotomaculum thermopropionicum (strain DSM 13744 / JCM 10971 / SI).